The sequence spans 61 residues: Small ribosomal subunit protein uS14 (61 aa).

Cys-24, Cys-27, Cys-40, and Cys-43 together coordinate Zn(2+).

The protein belongs to the universal ribosomal protein uS14 family. Zinc-binding uS14 subfamily. As to quaternary structure, part of the 30S ribosomal subunit. Contacts proteins S3 and S10. The cofactor is Zn(2+).

Binds 16S rRNA, required for the assembly of 30S particles and may also be responsible for determining the conformation of the 16S rRNA at the A site. This chain is Small ribosomal subunit protein uS14, found in Campylobacter curvus (strain 525.92).